The chain runs to 254 residues: 3-deoxy-manno-octulosonate cytidylyltransferase (254 aa).

The protein belongs to the KdsB family.

It localises to the cytoplasm. It carries out the reaction 3-deoxy-alpha-D-manno-oct-2-ulosonate + CTP = CMP-3-deoxy-beta-D-manno-octulosonate + diphosphate. It participates in nucleotide-sugar biosynthesis; CMP-3-deoxy-D-manno-octulosonate biosynthesis; CMP-3-deoxy-D-manno-octulosonate from 3-deoxy-D-manno-octulosonate and CTP: step 1/1. Its pathway is bacterial outer membrane biogenesis; lipopolysaccharide biosynthesis. Functionally, activates KDO (a required 8-carbon sugar) for incorporation into bacterial lipopolysaccharide in Gram-negative bacteria. The protein is 3-deoxy-manno-octulosonate cytidylyltransferase of Chlamydia trachomatis serovar L2 (strain ATCC VR-902B / DSM 19102 / 434/Bu).